Reading from the N-terminus, the 344-residue chain is Anthranilate phosphoribosyltransferase (344 aa).

Residues Gly80, Gly83–Asp84, Thr88, Asn90–Thr93, Lys108–Ser116, and Ser120 contribute to the 5-phospho-alpha-D-ribose 1-diphosphate site. Gly80 is a binding site for anthranilate. Mg(2+) is bound at residue Ser92. Residue Asn111 participates in anthranilate binding. Arg166 contributes to the anthranilate binding site. 2 residues coordinate Mg(2+): Asp225 and Glu226.

It belongs to the anthranilate phosphoribosyltransferase family. In terms of assembly, homodimer. The cofactor is Mg(2+).

It carries out the reaction N-(5-phospho-beta-D-ribosyl)anthranilate + diphosphate = 5-phospho-alpha-D-ribose 1-diphosphate + anthranilate. It participates in amino-acid biosynthesis; L-tryptophan biosynthesis; L-tryptophan from chorismate: step 2/5. Functionally, catalyzes the transfer of the phosphoribosyl group of 5-phosphorylribose-1-pyrophosphate (PRPP) to anthranilate to yield N-(5'-phosphoribosyl)-anthranilate (PRA). In Legionella pneumophila (strain Corby), this protein is Anthranilate phosphoribosyltransferase.